We begin with the raw amino-acid sequence, 362 residues long: Peptide chain release factor 1 (362 aa).

Residue Q237 is modified to N5-methylglutamine. Basic and acidic residues predominate over residues 282 to 296 (QQEEDKRRAEADSTR). Residues 282–304 (QQEEDKRRAEADSTRRSILSTGD) form a disordered region.

This sequence belongs to the prokaryotic/mitochondrial release factor family. Methylated by PrmC. Methylation increases the termination efficiency of RF1.

The protein localises to the cytoplasm. In terms of biological role, peptide chain release factor 1 directs the termination of translation in response to the peptide chain termination codons UAG and UAA. This is Peptide chain release factor 1 from Tolumonas auensis (strain DSM 9187 / NBRC 110442 / TA 4).